The chain runs to 76 residues: Centromere protein W (76 aa).

Belongs to the CENP-W/WIP1 family. As to quaternary structure, heterodimer with CENPT; this dimer coassembles with CENPS-CENPX heterodimers at centromeres to form the tetrameric CENP-T-W-S-X complex, which is a subcomplex of the large constitutive centromere-associated network (CCAN, also known as the interphase centromere complex or ICEN). Interacts with NPM1.

It is found in the nucleus. Its subcellular location is the chromosome. It localises to the centromere. The protein resides in the kinetochore. Its function is as follows. Component of the CENPA-NAC (nucleosome-associated) complex, a complex that plays a central role in assembly of kinetochore proteins, mitotic progression and chromosome segregation. The CENPA-NAC complex recruits the CENPA-CAD (nucleosome distal) complex and may be involved in incorporation of newly synthesized CENPA into centromeres. Part of a nucleosome-associated complex that binds specifically to histone H3-containing nucleosomes at the centromere, as opposed to nucleosomes containing CENPA. Component of the heterotetrameric CENP-T-W-S-X complex that binds and supercoils DNA, and plays an important role in kinetochore assembly. CENPW has a fundamental role in kinetochore assembly and function. It is one of the inner kinetochore proteins, with most further proteins binding downstream. Required for normal chromosome organization and normal progress through mitosis. The polypeptide is Centromere protein W (CENPW) (Gallus gallus (Chicken)).